A 919-amino-acid chain; its full sequence is MFRSNARALNRALERLKNVQTKVNEALKRSGIQEKSLERKLRIWLRKVEENVPLGELILEKRSSCAIWLSDKDVEILEKVKRLEEQGQDLIKKISVNKSSREIVERVLGPSFHPQKTALEMLDKLKDCLKKKNVQKIGVWGMGGVGKTTLVRTLNNDLLKYAATQQFALVIWVTVSKDFDLKRVQMDIAKRLGKRFTREQMNQLGLTICERLIDLKNFLLILDDVWHPIDLDQLGIPLALERSKDSKVVLTSRRLEVCQQMMTNENIKVACLQEKEAWELFCHNVGEVANSDNVKPIAKDVSHECCGLPLAIITIGRTLRGKPQVEVWKHTLNLLKRSAPSIDTEEKIFGTLKLSYDFLQDNMKSCFLFCALFPEDYSIKVSELIMYWVAEGLLDGQHHYEDMMNEGVTLVERLKDSCLLEDGDSCDTVKMHDVVRDFAIWFMSSQGEGFHSLVMAGRGLIEFPQDKFVSSVQRVSLMANKLERLPNNVIEGVETLVLLLQGNSHVKEVPNGFLQAFPNLRILDLSGVRIRTLPDSFSNLHSLRSLVLRNCKKLRNLPSLESLVKLQFLDLHESAIRELPRGLEALSSLRYICVSNTYQLQSIPAGTILQLSSLEVLDMAGSAYSWGIKGEEREGQATLDEVTCLPHLQFLAIKLLDVLSFSYEFDSLTKRLTKFQFLFSPIRSVSPPGTGEGCLAISDVNVSNASIGWLLQHVTSLDLNYCEGLNGMFENLVTKSKSSFVAMKALSIHYFPSLSLASGCESQLDLFPNLEELSLDNVNLESIGELNGFLGMRLQKLKLLQVSGCRQLKRLFSDQILAGTLPNLQEIKVVSCLRLEELFNFSSVPVDFCAESLLPKLTVIKLKYLPQLRSLCNDRVVLESLEHLEVESCESLKNLPFVPGNTGMINEQMAWEYMSRTLG.

2 coiled-coil regions span residues 1 to 30 (MFRSNARALNRALERLKNVQTKVNEALKRS) and 74 to 95 (VEILEKVKRLEEQGQDLIKKIS). The 279-residue stretch at 121–399 (MLDKLKDCLK…AEGLLDGQHH (279 aa)) folds into the NB-ARC domain. Residue 141 to 148 (GMGGVGKT) coordinates ATP. 8 LRR repeats span residues 447–468 (GEGFHSLVMAGRGLIEFPQDKF), 469–492 (VSSVQRVSLMANKLERLPNNVIEG), 494–516 (ETLVLLLQGNSHVKEVPNGFLQA), 519–540 (NLRILDLSGVRIRTLPDSFSNL), 542–564 (SLRSLVLRNCKKLRNLPSLESLV), 565–587 (KLQFLDLHESAIRELPRGLEALS), 588–610 (SLRYICVSNTYQLQSIPAGTILQ), and 611–635 (LSSLEVLDMAGSAYSWGIKGEEREG).

This sequence belongs to the disease resistance NB-LRR family.

Probable disease resistance protein. The protein is Probable disease resistance protein At4g27220 of Arabidopsis thaliana (Mouse-ear cress).